The sequence spans 873 residues: Leucine--tRNA ligase (873 aa).

Positions 43–53 (PYPSGSLHMGH) match the 'HIGH' region motif. The 'KMSKS' region motif lies at 624-628 (TMSKS). Residue K627 participates in ATP binding.

The protein belongs to the class-I aminoacyl-tRNA synthetase family.

Its subcellular location is the cytoplasm. The enzyme catalyses tRNA(Leu) + L-leucine + ATP = L-leucyl-tRNA(Leu) + AMP + diphosphate. The sequence is that of Leucine--tRNA ligase from Synechococcus sp. (strain JA-3-3Ab) (Cyanobacteria bacterium Yellowstone A-Prime).